Reading from the N-terminus, the 415-residue chain is Glutamate-1-semialdehyde 2,1-aminomutase (415 aa).

An N6-(pyridoxal phosphate)lysine modification is found at K260.

This sequence belongs to the class-III pyridoxal-phosphate-dependent aminotransferase family. HemL subfamily. The cofactor is pyridoxal 5'-phosphate.

The protein localises to the cytoplasm. It carries out the reaction (S)-4-amino-5-oxopentanoate = 5-aminolevulinate. It participates in porphyrin-containing compound metabolism; protoporphyrin-IX biosynthesis; 5-aminolevulinate from L-glutamyl-tRNA(Glu): step 2/2. The sequence is that of Glutamate-1-semialdehyde 2,1-aminomutase from Methanoculleus marisnigri (strain ATCC 35101 / DSM 1498 / JR1).